A 2207-amino-acid polypeptide reads, in one-letter code: Genome polyprotein (2207 aa).

Glycine 2 is lipidated: N-myristoyl glycine; by host. Residues 2-1518 (GAQVSSQKVG…NINRAMTILQ (1517 aa)) lie on the Cytoplasmic side of the membrane. The amphipathic alpha-helix stretch occupies residues 579–599 (GLGDLIEGVVEGVTRNALTPL). A compositionally biased stretch (polar residues) spans 597-613 (TPLTPANNLPDTQSSGP). 2 disordered regions span residues 597–620 (TPLT…KETP) and 628–647 (GATN…VIQK). Residues histidine 899 and aspartate 917 each act as for protease 2A activity in the active site. Residues cysteine 934 and cysteine 936 each contribute to the Zn(2+) site. The active-site For protease 2A activity is the cysteine 988. Residues cysteine 994 and histidine 996 each coordinate Zn(2+). Positions 1126–1198 (GDSWLKKFTE…HQSCPSQEHQ (73 aa)) are membrane-binding. Residues 1126-1264 (GDSWLKKFTE…SPGTGKSVAT (139 aa)) form an oligomerization region. The segment at 1147 to 1151 (SNKIS) is RNA-binding. An SF3 helicase domain is found at 1230-1386 (EHTINNYVQF…SEYSRDGKLN (157 aa)). ATP is bound at residue 1254 to 1261 (GSPGTGKS). Zn(2+) contacts are provided by cysteine 1394, cysteine 1397, cysteine 1406, and cysteine 1411. A C4-type zinc finger spans residues 1394 to 1411 (CKNCHHPANFKRCCPLVC). An RNA-binding region spans residues 1438-1445 (ERNRRSSI). The oligomerization stretch occupies residues 1449 to 1454 (MEALFQ). The stretch at 1519-1534 (AVTTFAAVAGVVYVMY) is an intramembrane region. Topologically, residues 1535–2207 (KLFAGHQGAY…TLYRRWLDSF (673 aa)) are cytoplasmic. Tyrosine 1544 bears the O-(5'-phospho-RNA)-tyrosine mark. The 179-residue stretch at 1564–1742 (GPGFDYAVAM…FAAALKRSYF (179 aa)) folds into the Peptidase C3 domain. Residues histidine 1603, glutamate 1634, and cysteine 1710 each act as for protease 3C activity in the active site. The region spanning 1973–2088 (EKLFAFDYTG…SYPHEVDASL (116 aa)) is the RdRp catalytic domain. Mg(2+)-binding residues include aspartate 1979 and aspartate 2074.

It belongs to the picornaviruses polyprotein family. Interacts with capsid protein VP1 and capsid protein VP3 to form heterotrimeric protomers. In terms of assembly, interacts with capsid protein VP0, and capsid protein VP3 to form heterotrimeric protomers. Interacts with human PVR. Five protomers subsequently associate to form pentamers which serve as building blocks for the capsid. Interacts with capsid protein VP2, capsid protein VP3 and capsid protein VP4 following cleavage of capsid protein VP0. As to quaternary structure, interacts with capsid protein VP1 and capsid protein VP3 in the mature capsid. Interacts with capsid protein VP0 and capsid protein VP1 to form heterotrimeric protomers. Five protomers subsequently associate to form pentamers which serve as building blocks for the capsid. Interacts with capsid protein VP4 in the mature capsid. Interacts with protein 2C; this interaction may be important for virion morphogenesis. In terms of assembly, interacts with capsid protein VP1 and capsid protein VP3. As to quaternary structure, homodimer. Homohexamer; forms a hexameric ring structure with 6-fold symmetry characteristic of AAA+ ATPases. Interacts (via N-terminus) with host RTN3 (via reticulon domain); this interaction is important for viral replication. Interacts with capsid protein VP3; this interaction may be important for virion morphogenesis. In terms of assembly, interacts with protein 3CD. As to quaternary structure, homodimer. Interacts with host GBF1. Interacts (via GOLD domain) with host ACBD3 (via GOLD domain); this interaction allows the formation of a viral protein 3A/ACBD3 heterotetramer with a 2:2 stoichiometry, which will stimulate the recruitment of host PI4KB in order to synthesize PI4P at the viral RNA replication sites. Interacts with RNA-directed RNA polymerase. In terms of assembly, interacts with protein 3AB and with RNA-directed RNA polymerase. As to quaternary structure, interacts with Viral protein genome-linked and with protein 3CD. The cofactor is Mg(2+). Specific enzymatic cleavages in vivo by the viral proteases yield processing intermediates and the mature proteins. In terms of processing, myristoylation is required for the formation of pentamers during virus assembly. Further assembly of 12 pentamers and a molecule of genomic RNA generates the provirion. Post-translationally, during virion maturation, immature virions are rendered infectious following cleavage of VP0 into VP4 and VP2. This maturation seems to be an autocatalytic event triggered by the presence of RNA in the capsid and it is followed by a conformational change infectious virion. Myristoylation is required during RNA encapsidation and formation of the mature virus particle. In terms of processing, VPg is uridylylated by the polymerase into VPg-pUpU. This acts as a nucleotide-peptide primer for the genomic RNA replication.

The protein resides in the virion. It is found in the host cytoplasm. The protein localises to the host cytoplasmic vesicle membrane. Its subcellular location is the host nucleus. The enzyme catalyses a ribonucleoside 5'-triphosphate + H2O = a ribonucleoside 5'-diphosphate + phosphate + H(+). The catalysed reaction is Selective cleavage of Tyr-|-Gly bond in the picornavirus polyprotein.. It carries out the reaction RNA(n) + a ribonucleoside 5'-triphosphate = RNA(n+1) + diphosphate. It catalyses the reaction Selective cleavage of Gln-|-Gly bond in the poliovirus polyprotein. In other picornavirus reactions Glu may be substituted for Gln, and Ser or Thr for Gly.. With respect to regulation, replication or transcription is subject to high level of random mutations by the nucleotide analog ribavirin. Functionally, forms an icosahedral capsid of pseudo T=3 symmetry with capsid proteins VP2 and VP3. The capsid is 300 Angstroms in diameter, composed of 60 copies of each capsid protein and enclosing the viral positive strand RNA genome. Capsid protein VP1 mainly forms the vertices of the capsid. Capsid protein VP1 interacts with host cell receptor PVR to provide virion attachment to target host cells. This attachment induces virion internalization predominantly through clathrin- and caveolin-independent endocytosis in Hela cells and through caveolin-mediated endocytosis in brain microvascular endothelial cells. Tyrosine kinases are probably involved in the entry process. Virus binding to PVR induces increased junctional permeability and rearrangement of junctional proteins. Modulation of endothelial tight junctions, as well as cytolytic infection of endothelial cells themselves, may result in loss of endothelial integrity which may help the virus to reach the CNS. After binding to its receptor, the capsid undergoes conformational changes. Capsid protein VP1 N-terminus (that contains an amphipathic alpha-helix) and capsid protein VP4 are externalized. Together, they shape a pore in the host membrane through which viral genome is translocated to host cell cytoplasm. Forms an icosahedral capsid of pseudo T=3 symmetry with capsid proteins VP2 and VP3. The capsid is 300 Angstroms in diameter, composed of 60 copies of each capsid protein and enclosing the viral positive strand RNA genome. Its function is as follows. Lies on the inner surface of the capsid shell. After binding to the host receptor, the capsid undergoes conformational changes. Capsid protein VP4 is released, Capsid protein VP1 N-terminus is externalized, and together, they shape a pore in the host membrane through which the viral genome is translocated into the host cell cytoplasm. In terms of biological role, component of immature procapsids, which is cleaved into capsid proteins VP4 and VP2 after maturation. Allows the capsid to remain inactive before the maturation step. Functionally, cysteine protease that cleaves viral polyprotein and specific host proteins. It is responsible for the autocatalytic cleavage between the P1 and P2 regions, which is the first cleavage occurring in the polyprotein. Also cleaves the host translation initiation factor EIF4G1, in order to shut down the capped cellular mRNA translation. Inhibits the host nucleus-cytoplasm protein and RNA trafficking by cleaving host members of the nuclear pores including NUP98, NUP62 and NUP153. Counteracts stress granule formation probably by antagonizing its assembly or promoting its dissassembly. Cleaves and inhibits host IFIH1/MDA5, thereby inhibiting the type-I IFN production and the establishment of the antiviral state. Cleaves and inhibits host MAVS, thereby inhibiting the type-I IFN production and the establishment of the antiviral state. Plays an essential role in the virus replication cycle by acting as a viroporin. Creates a pore in the host endoplasmic reticulum and as a consequence releases Ca2+ in the cytoplasm of infected cell. In turn, high levels of cytoplasmic calcium may trigger membrane trafficking and transport of viral ER-associated proteins to viroplasms, sites of viral genome replication. Its function is as follows. Induces and associates with structural rearrangements of intracellular membranes. Displays RNA-binding, nucleotide binding and NTPase activities. May play a role in virion morphogenesis and viral RNA encapsidation by interacting with the capsid protein VP3. In terms of biological role, localizes the viral replication complex to the surface of membranous vesicles. Together with protein 3CD binds the Cis-Active RNA Element (CRE) which is involved in RNA synthesis initiation. Acts as a cofactor to stimulate the activity of 3D polymerase, maybe through a nucleid acid chaperone activity. Functionally, localizes the viral replication complex to the surface of membranous vesicles. It inhibits host cell endoplasmic reticulum-to-Golgi apparatus transport and causes the disassembly of the Golgi complex, possibly through GBF1 interaction. This would result in depletion of MHC, trail receptors and IFN receptors at the host cell surface. Plays an essential role in viral RNA replication by recruiting ACBD3 and PI4KB at the viral replication sites, thereby allowing the formation of the rearranged membranous structures where viral replication takes place. Acts as a primer for viral RNA replication and remains covalently bound to viral genomic RNA. VPg is uridylylated prior to priming replication into VPg-pUpU. The oriI viral genomic sequence may act as a template for this. The VPg-pUpU is then used as primer on the genomic RNA poly(A) by the RNA-dependent RNA polymerase to replicate the viral genome. During genome replication, the VPg-RNA linkage is removed by the host TDP2, thereby accelerating replication. During the late stage of the replication cycle, host TDP2 is excluded from sites of viral RNA synthesis and encapsidation, allowing for the generation of progeny virions. Its function is as follows. Involved in the viral replication complex and viral polypeptide maturation. It exhibits protease activity with a specificity and catalytic efficiency that is different from protease 3C. Protein 3CD lacks polymerase activity. Protein 3CD binds to the 5'UTR of the viral genome. In terms of biological role, major viral protease that mediates proteolytic processing of the polyprotein. Cleaves host EIF5B, contributing to host translation shutoff. Also cleaves host PABPC1, contributing to host translation shutoff. Cleaves host RIGI and thus contributes to the inhibition of type I interferon production. Cleaves host NLRP1, triggers host N-glycine-mediated degradation of the autoinhibitory NLRP1 N-terminal fragment. Inhibits the integrated stress response (ISR) in the infected cell by cleaving host G3BP1. Stress granule formation is thus inhibited, which allows protein synthesis and viral replication. Functionally, replicates the viral genomic RNA on the surface of intracellular membranes. May form linear arrays of subunits that propagate along a strong head-to-tail interaction called interface-I. Covalently attaches UMP to a tyrosine of VPg, which is used to prime RNA synthesis. The positive stranded RNA genome is first replicated at virus induced membranous vesicles, creating a dsRNA genomic replication form. This dsRNA is then used as template to synthesize positive stranded RNA genomes. ss(+)RNA genomes are either translated, replicated or encapsidated. This Homo sapiens (Human) protein is Genome polyprotein.